Here is a 675-residue protein sequence, read N- to C-terminus: Potassium-transporting ATPase ATP-binding subunit (675 aa).

A run of 4 helical transmembrane segments spans residues 34–54 (IMFV…FPDI), 65–85 (LITI…SEAF), 216–236 (IALF…IVTL), and 245–265 (LILP…TTIG). D304 (4-aspartylphosphate intermediate) is an active-site residue. Residues D341, E345, 372–379 (FTAETRMS), and K390 each bind ATP. D513 and D517 together coordinate Mg(2+). 3 helical membrane-spanning segments follow: residues 569 to 591 (ALTT…ALMM), 611 to 631 (AIIS…PIAM), and 644 to 664 (IFIN…FLGI).

Belongs to the cation transport ATPase (P-type) (TC 3.A.3) family. Type IA subfamily. In terms of assembly, the system is composed of three essential subunits: KdpA, KdpB and KdpC.

It is found in the cell membrane. The enzyme catalyses K(+)(out) + ATP + H2O = K(+)(in) + ADP + phosphate + H(+). In terms of biological role, part of the high-affinity ATP-driven potassium transport (or Kdp) system, which catalyzes the hydrolysis of ATP coupled with the electrogenic transport of potassium into the cytoplasm. This subunit is responsible for energy coupling to the transport system and for the release of the potassium ions to the cytoplasm. The sequence is that of Potassium-transporting ATPase ATP-binding subunit from Staphylococcus aureus (strain bovine RF122 / ET3-1).